The sequence spans 428 residues: Enolase (428 aa).

A (2R)-2-phosphoglycerate-binding site is contributed by Q167. The Proton donor role is filled by E209. Residues D246, E288, and D315 each coordinate Mg(2+). (2R)-2-phosphoglycerate is bound by residues K340, R369, S370, and K391. K340 serves as the catalytic Proton acceptor.

Belongs to the enolase family. In terms of assembly, component of the RNA degradosome, a multiprotein complex involved in RNA processing and mRNA degradation. It depends on Mg(2+) as a cofactor.

It is found in the cytoplasm. Its subcellular location is the secreted. The protein localises to the cell surface. The enzyme catalyses (2R)-2-phosphoglycerate = phosphoenolpyruvate + H2O. The protein operates within carbohydrate degradation; glycolysis; pyruvate from D-glyceraldehyde 3-phosphate: step 4/5. Functionally, catalyzes the reversible conversion of 2-phosphoglycerate (2-PG) into phosphoenolpyruvate (PEP). It is essential for the degradation of carbohydrates via glycolysis. The chain is Enolase from Pseudomonas savastanoi pv. phaseolicola (strain 1448A / Race 6) (Pseudomonas syringae pv. phaseolicola (strain 1448A / Race 6)).